Reading from the N-terminus, the 132-residue chain is Small ribosomal subunit protein bS6 (132 aa).

A disordered region spans residues D94–D132. Residues D122–D132 are compositionally biased toward acidic residues.

This sequence belongs to the bacterial ribosomal protein bS6 family.

Functionally, binds together with bS18 to 16S ribosomal RNA. The polypeptide is Small ribosomal subunit protein bS6 (Psychrobacter arcticus (strain DSM 17307 / VKM B-2377 / 273-4)).